Here is a 331-residue protein sequence, read N- to C-terminus: Small ribosomal subunit protein uS2 (331 aa).

The protein belongs to the universal ribosomal protein uS2 family.

This chain is Small ribosomal subunit protein uS2, found in Bradyrhizobium diazoefficiens (strain JCM 10833 / BCRC 13528 / IAM 13628 / NBRC 14792 / USDA 110).